We begin with the raw amino-acid sequence, 563 residues long: Cystathionine gamma-synthase-like protein ankD (563 aa).

The disordered stretch occupies residues 1–37 (MGELGPASAQHGSDSISFSGSYTQPLGAPQPPNEPHA). Positions 10 to 24 (QHGSDSISFSGSYTQ) are enriched in polar residues.

It belongs to the trans-sulfuration enzymes family. MET7 subfamily. It depends on pyridoxal 5'-phosphate as a cofactor.

The enzyme catalyses cyclo(L-arginyl-(Z)-dehydro-3,4-dihydroxytyrosyl) + O-acetyl-L-homoserine = cyclo(L-arginyl-(Z)-dehydro-4-O-homoseryl-tyrosyl) + acetate + H(+). It functions in the pathway secondary metabolite biosynthesis. Functionally, cystathionine gamma-synthase-like protein; part of the ank cluster that mediates the biosynthesis of NK13650 C, a highly modified cyclo-arginine-tyrosine dipeptide. AnkD catalyzes the attachment of L-homoserine moiety using O-acetyl-L-homoserine as co-substrate. Within the pathway, the cyclodipeptide synthase ankA acts as the scaffold-generating enzyme and is responsible for formation of the cyclo-Arg-Tyr diketopiperazine (cRY) from L-Arg and L-Tyr. The ankA product cRY is desaturated by the cytochrome P450 monooxygenase ankB to yield a dehydro-cyclodipeptide intermediate. The FAD-dependent monooxygenase ankC then installs the m-OH, ankD catalyzes the attachment of L-homoserine, and ankE ligates citrate to the ankD product to yield NK13650 B. The O-methyltransferase ankF is responsible for methylation of the C-17 phenol group of NK13650 B to produce NK13650 D. Amidation of NK13650 D with L-Asp by ankG then leads to the production of NK13650 C, whereas amidation of NK13650 B produces NK13650 A. The sequence is that of Cystathionine gamma-synthase-like protein ankD from Aspergillus thermomutatus (Neosartorya pseudofischeri).